The following is a 304-amino-acid chain: Small ribosomal subunit protein uS3 (304 aa).

Residues 17 to 86 form the KH type-2 domain; sequence MDEYFAKQLS…NPQIDAQEVK (70 aa).

It belongs to the universal ribosomal protein uS3 family. Part of the 30S ribosomal subunit.

Its function is as follows. Binds the lower part of the 30S subunit head. The chain is Small ribosomal subunit protein uS3 from Methanococcoides burtonii (strain DSM 6242 / NBRC 107633 / OCM 468 / ACE-M).